The following is a 30-amino-acid chain: GIPCAESCVWIPCTVTALLGCSCSNNVCYN.

Residues 1-30 (GIPCAESCVWIPCTVTALLGCSCSNNVCYN) constitute a cross-link (cyclopeptide (Gly-Asn)). 3 disulfides stabilise this stretch: cysteine 4-cysteine 21, cysteine 8-cysteine 23, and cysteine 13-cysteine 28.

This is a cyclic peptide.

Probably participates in a plant defense mechanism. Has potent hemolytic activity. The chain is Cycloviolacin-H4 from Viola hederacea (Australian violet).